The following is a 60-amino-acid chain: Homeobox protein EgHBX4 (60 aa).

A DNA-binding region (homeobox) is located at residues 1 to 60; that stretch reads SRRERTIYTPEQLEAMEEVFGVNRYPDVSMREELASRLGINESKIQVWFKNRRAKLRNLE.

It belongs to the paired homeobox family. Bicoid subfamily.

Its subcellular location is the nucleus. The polypeptide is Homeobox protein EgHBX4 (HBX4) (Echinococcus granulosus (Hydatid tapeworm)).